The primary structure comprises 141 residues: Large-conductance mechanosensitive channel (141 aa).

2 consecutive transmembrane segments (helical) span residues 16-36 and 83-103; these read VIDL…VDSL and GAFI…FVAI.

It belongs to the MscL family. As to quaternary structure, homopentamer.

It localises to the cell inner membrane. Its function is as follows. Channel that opens in response to stretch forces in the membrane lipid bilayer. May participate in the regulation of osmotic pressure changes within the cell. This is Large-conductance mechanosensitive channel from Azoarcus sp. (strain BH72).